The following is an 81-amino-acid chain: Photosystem I iron-sulfur center (81 aa).

2 consecutive 4Fe-4S ferredoxin-type domains span residues 2–31 and 39–68; these read AHSVKIYDTCIGCTQCVRACPTDVLEMIPW and IASAPRTEDCVGCKRCESACPTDFLSVRVY. [4Fe-4S] cluster-binding residues include Cys-11, Cys-14, Cys-17, Cys-21, Cys-48, Cys-51, Cys-54, and Cys-58.

The eukaryotic PSI reaction center is composed of at least 11 subunits. It depends on [4Fe-4S] cluster as a cofactor.

It is found in the plastid. The protein resides in the chloroplast thylakoid membrane. The catalysed reaction is reduced [plastocyanin] + hnu + oxidized [2Fe-2S]-[ferredoxin] = oxidized [plastocyanin] + reduced [2Fe-2S]-[ferredoxin]. Its function is as follows. Apoprotein for the two 4Fe-4S centers FA and FB of photosystem I (PSI); essential for photochemical activity. FB is the terminal electron acceptor of PSI, donating electrons to ferredoxin. The C-terminus interacts with PsaA/B/D and helps assemble the protein into the PSI complex. Required for binding of PsaD and PsaE to PSI. PSI is a plastocyanin-ferredoxin oxidoreductase, converting photonic excitation into a charge separation, which transfers an electron from the donor P700 chlorophyll pair to the spectroscopically characterized acceptors A0, A1, FX, FA and FB in turn. The chain is Photosystem I iron-sulfur center from Adiantum capillus-veneris (Maidenhair fern).